A 155-amino-acid chain; its full sequence is 3-hydroxyacyl-[acyl-carrier-protein] dehydratase FabZ (155 aa).

Residue histidine 61 is part of the active site.

This sequence belongs to the thioester dehydratase family. FabZ subfamily.

It localises to the cytoplasm. It catalyses the reaction a (3R)-hydroxyacyl-[ACP] = a (2E)-enoyl-[ACP] + H2O. Its function is as follows. Involved in unsaturated fatty acids biosynthesis. Catalyzes the dehydration of short chain beta-hydroxyacyl-ACPs and long chain saturated and unsaturated beta-hydroxyacyl-ACPs. This chain is 3-hydroxyacyl-[acyl-carrier-protein] dehydratase FabZ, found in Synechococcus elongatus (strain ATCC 33912 / PCC 7942 / FACHB-805) (Anacystis nidulans R2).